The chain runs to 341 residues: Ketol-acid reductoisomerase (NADP(+)) (341 aa).

Residues 2–182 (TDIVYDKDAD…GGLRAGGIRT (181 aa)) enclose the KARI N-terminal Rossmann domain. NADP(+)-binding positions include 25-28 (YGSQ), K48, S51, S53, and 83-86 (DQHQ). Residue H108 is part of the active site. Position 134 (G134) interacts with NADP(+). In terms of domain architecture, KARI C-terminal knotted spans 183–328 (TFTEETETDL…RELRKLFAWN (146 aa)). Positions 191, 195, 227, and 231 each coordinate Mg(2+). Residue S252 participates in substrate binding.

Belongs to the ketol-acid reductoisomerase family. Requires Mg(2+) as cofactor.

The catalysed reaction is (2R)-2,3-dihydroxy-3-methylbutanoate + NADP(+) = (2S)-2-acetolactate + NADPH + H(+). It catalyses the reaction (2R,3R)-2,3-dihydroxy-3-methylpentanoate + NADP(+) = (S)-2-ethyl-2-hydroxy-3-oxobutanoate + NADPH + H(+). It participates in amino-acid biosynthesis; L-isoleucine biosynthesis; L-isoleucine from 2-oxobutanoate: step 2/4. The protein operates within amino-acid biosynthesis; L-valine biosynthesis; L-valine from pyruvate: step 2/4. Functionally, involved in the biosynthesis of branched-chain amino acids (BCAA). Catalyzes an alkyl-migration followed by a ketol-acid reduction of (S)-2-acetolactate (S2AL) to yield (R)-2,3-dihydroxy-isovalerate. In the isomerase reaction, S2AL is rearranged via a Mg-dependent methyl migration to produce 3-hydroxy-3-methyl-2-ketobutyrate (HMKB). In the reductase reaction, this 2-ketoacid undergoes a metal-dependent reduction by NADPH to yield (R)-2,3-dihydroxy-isovalerate. The chain is Ketol-acid reductoisomerase (NADP(+)) from Clavibacter michiganensis subsp. michiganensis (strain NCPPB 382).